Consider the following 385-residue polypeptide: Outer membrane protein P2 (385 aa).

The N-terminal stretch at 1–20 is a signal peptide; sequence MKKTLAALIVGAFAASAANA.

Belongs to the Gram-negative porin family. As to quaternary structure, homotrimer.

The protein localises to the cell outer membrane. Functionally, forms pores that allow passive diffusion of small molecules across the outer membrane. The chain is Outer membrane protein P2 (ompP2) from Haemophilus influenzae.